The chain runs to 292 residues: 4-hydroxy-tetrahydrodipicolinate synthase (292 aa).

Threonine 45 is a binding site for pyruvate. Residue tyrosine 133 is the Proton donor/acceptor of the active site. Residue lysine 161 is the Schiff-base intermediate with substrate of the active site. Position 203 (isoleucine 203) interacts with pyruvate.

It belongs to the DapA family. Homodimer.

Its subcellular location is the cytoplasm. It catalyses the reaction L-aspartate 4-semialdehyde + pyruvate = (2S,4S)-4-hydroxy-2,3,4,5-tetrahydrodipicolinate + H2O + H(+). Its pathway is amino-acid biosynthesis; L-lysine biosynthesis via DAP pathway; (S)-tetrahydrodipicolinate from L-aspartate: step 3/4. Its function is as follows. Catalyzes the condensation of (S)-aspartate-beta-semialdehyde [(S)-ASA] and pyruvate to 4-hydroxy-tetrahydrodipicolinate (HTPA). The chain is 4-hydroxy-tetrahydrodipicolinate synthase from Pseudomonas savastanoi pv. phaseolicola (strain 1448A / Race 6) (Pseudomonas syringae pv. phaseolicola (strain 1448A / Race 6)).